Consider the following 946-residue polypeptide: Bifunctional glutamine synthetase adenylyltransferase/adenylyl-removing enzyme (946 aa).

Residues 1 to 440 (MKPLSSPLQQ…VFNELIGDDE (440 aa)) form an adenylyl removase region. Residues 449–946 (SEQWRELWQD…ASWQKWLVEE (498 aa)) form an adenylyl transferase region.

It belongs to the GlnE family. The cofactor is Mg(2+).

It carries out the reaction [glutamine synthetase]-O(4)-(5'-adenylyl)-L-tyrosine + phosphate = [glutamine synthetase]-L-tyrosine + ADP. The enzyme catalyses [glutamine synthetase]-L-tyrosine + ATP = [glutamine synthetase]-O(4)-(5'-adenylyl)-L-tyrosine + diphosphate. Involved in the regulation of glutamine synthetase GlnA, a key enzyme in the process to assimilate ammonia. When cellular nitrogen levels are high, the C-terminal adenylyl transferase (AT) inactivates GlnA by covalent transfer of an adenylyl group from ATP to specific tyrosine residue of GlnA, thus reducing its activity. Conversely, when nitrogen levels are low, the N-terminal adenylyl removase (AR) activates GlnA by removing the adenylyl group by phosphorolysis, increasing its activity. The regulatory region of GlnE binds the signal transduction protein PII (GlnB) which indicates the nitrogen status of the cell. The protein is Bifunctional glutamine synthetase adenylyltransferase/adenylyl-removing enzyme of Escherichia coli O127:H6 (strain E2348/69 / EPEC).